Consider the following 517-residue polypeptide: Bifunctional purine biosynthesis protein PurH (517 aa).

The MGS-like domain occupies 1–146; the sequence is MAPIALLSVS…KNHAHVAVLT (146 aa).

It belongs to the PurH family.

It catalyses the reaction (6R)-10-formyltetrahydrofolate + 5-amino-1-(5-phospho-beta-D-ribosyl)imidazole-4-carboxamide = 5-formamido-1-(5-phospho-D-ribosyl)imidazole-4-carboxamide + (6S)-5,6,7,8-tetrahydrofolate. It carries out the reaction IMP + H2O = 5-formamido-1-(5-phospho-D-ribosyl)imidazole-4-carboxamide. Its pathway is purine metabolism; IMP biosynthesis via de novo pathway; 5-formamido-1-(5-phospho-D-ribosyl)imidazole-4-carboxamide from 5-amino-1-(5-phospho-D-ribosyl)imidazole-4-carboxamide (10-formyl THF route): step 1/1. It functions in the pathway purine metabolism; IMP biosynthesis via de novo pathway; IMP from 5-formamido-1-(5-phospho-D-ribosyl)imidazole-4-carboxamide: step 1/1. The polypeptide is Bifunctional purine biosynthesis protein PurH (Prochlorococcus marinus (strain MIT 9303)).